A 319-amino-acid chain; its full sequence is MPREDRATWKSNYFLKIIQLLDDFPKCFIVGADNVGSKQMQTIRLSLRGKAVVLMGKNTMMRKAIRGHLENNPALERLLPHIRGNVGFVFTKEDLTEVRDLLLANKVPAAARAGAIAPCEVTVPAQNTGLGPEKTSFFQALGITTKISRGTIEILSDVQLIKPGDKVGASEATLLNMLNMLNISPFSYGLIIQQVYDNGSVYSPEVLDITEDALHKRFLKGVRNIASVCLQIGYPTLASIPHTIINGYKRVLAVTVETDYTFPLAEKVKAYLADPTAFAVAAPVAAATEQKSAAPAAKEEAPKEDSEESDEDMGFGLFD.

Positions 289 to 319 are disordered; that stretch reads EQKSAAPAAKEEAPKEDSEESDEDMGFGLFD.

Belongs to the universal ribosomal protein uL10 family. As to quaternary structure, P0 forms a pentameric complex by interaction with dimers of P1 and P2. Post-translationally, phosphorylated.

It is found in the nucleus. Its subcellular location is the cytoplasm. In terms of biological role, ribosomal protein P0 is the functional equivalent of E.coli protein L10. The protein is Large ribosomal subunit protein uL10 (rplp0) of Danio rerio (Zebrafish).